The chain runs to 502 residues: Glucose-6-phosphate isomerase (502 aa).

The Proton donor role is filled by Glu-331. Residues His-362 and Lys-471 contribute to the active site.

This sequence belongs to the GPI family.

The protein localises to the cytoplasm. The enzyme catalyses alpha-D-glucose 6-phosphate = beta-D-fructose 6-phosphate. It functions in the pathway carbohydrate biosynthesis; gluconeogenesis. It participates in carbohydrate degradation; glycolysis; D-glyceraldehyde 3-phosphate and glycerone phosphate from D-glucose: step 2/4. Catalyzes the reversible isomerization of glucose-6-phosphate to fructose-6-phosphate. This chain is Glucose-6-phosphate isomerase, found in Xylella fastidiosa (strain M12).